The chain runs to 269 residues: MDPKVIIKNPTFDSSDNNPDLIKVKNVDFFYKGNKRALFNISMKIKEHTVTAFIGSSGSGKSTLLRLFNRMNDVEPKSIFKGEILINGKNIYSPETDIVKLRTDIGMVFQKPSPFPMSIYDNVAYGPRNQGVRDRKLVNSIVVENLKRAALWDEVKDNLRDSAFALSGGQQQRLCIARAIAMKPKILLMDEPTSALDPISTSKIEELITQLKKDFTIVLVTHHMQQAARVADYTAFFAKGKLIEYNKTKIIFSRPANKKTEDYITGRFE.

One can recognise an ABC transporter domain in the interval 22–264; it reads IKVKNVDFFY…PANKKTEDYI (243 aa). 55-62 contacts ATP; the sequence is GSSGSGKS.

Belongs to the ABC transporter superfamily. Phosphate importer (TC 3.A.1.7) family. The complex is composed of two ATP-binding proteins (PstB), two transmembrane proteins (PstC and PstA) and a solute-binding protein (PstS).

It localises to the cell membrane. It catalyses the reaction phosphate(out) + ATP + H2O = ADP + 2 phosphate(in) + H(+). Functionally, part of the ABC transporter complex PstSACB involved in phosphate import. Responsible for energy coupling to the transport system. The sequence is that of Phosphate import ATP-binding protein PstB from Spiroplasma kunkelii.